A 143-amino-acid polypeptide reads, in one-letter code: Large ribosomal subunit protein uL11 (143 aa).

Belongs to the universal ribosomal protein uL11 family. Part of the ribosomal stalk of the 50S ribosomal subunit. Interacts with L10 and the large rRNA to form the base of the stalk. L10 forms an elongated spine to which L12 dimers bind in a sequential fashion forming a multimeric L10(L12)X complex. One or more lysine residues are methylated.

In terms of biological role, forms part of the ribosomal stalk which helps the ribosome interact with GTP-bound translation factors. The protein is Large ribosomal subunit protein uL11 of Pseudomonas putida (strain ATCC 700007 / DSM 6899 / JCM 31910 / BCRC 17059 / LMG 24140 / F1).